A 390-amino-acid polypeptide reads, in one-letter code: tRNA(Met) cytidine acetate ligase (390 aa).

Residues isoleucine 7–histidine 20, glycine 101, asparagine 152, and arginine 177 each bind ATP.

The protein belongs to the TmcAL family.

Its subcellular location is the cytoplasm. It carries out the reaction cytidine(34) in elongator tRNA(Met) + acetate + ATP = N(4)-acetylcytidine(34) in elongator tRNA(Met) + AMP + diphosphate. Catalyzes the formation of N(4)-acetylcytidine (ac(4)C) at the wobble position of elongator tRNA(Met), using acetate and ATP as substrates. First activates an acetate ion to form acetyladenylate (Ac-AMP) and then transfers the acetyl group to tRNA to form ac(4)C34. This chain is tRNA(Met) cytidine acetate ligase, found in Leuconostoc mesenteroides subsp. mesenteroides (strain ATCC 8293 / DSM 20343 / BCRC 11652 / CCM 1803 / JCM 6124 / NCDO 523 / NBRC 100496 / NCIMB 8023 / NCTC 12954 / NRRL B-1118 / 37Y).